The following is a 393-amino-acid chain: Mitogen-activated protein kinase SIPK (393 aa).

A compositionally biased stretch (polar residues) spans 1–11; it reads MDGSGQQTDTM. The segment at 1-31 is disordered; that stretch reads MDGSGQQTDTMMSDAGAEQPPPAPQPVAGMD. The Protein kinase domain maps to 60 to 345; that stretch reads KPPILPIGKG…VEGALAHPYL (286 aa). ATP is bound by residues 66 to 74 and Lys89; that span reads IGKGAYGIV. Asp186 acts as the Proton acceptor in catalysis. The TXY motif lies at 218–220; the sequence is TEY.

This sequence belongs to the protein kinase superfamily. CMGC Ser/Thr protein kinase family. MAP kinase subfamily. Interacts with SIPKK.

The enzyme catalyses L-tyrosyl-[protein] + ATP = O-phospho-L-tyrosyl-[protein] + ADP + H(+). It catalyses the reaction L-seryl-[protein] + ATP = O-phospho-L-seryl-[protein] + ADP + H(+). It carries out the reaction L-threonyl-[protein] + ATP = O-phospho-L-threonyl-[protein] + ADP + H(+). With respect to regulation, activated by threonine and tyrosine phosphorylation. Phosphorylates myelin basic protein (MBP) in vitro. May be involved in disease resistance. The protein is Mitogen-activated protein kinase SIPK of Nicotiana tabacum (Common tobacco).